The sequence spans 202 residues: Protein lin-28 homolog A (202 aa).

The segment at 1 to 31 is disordered; the sequence is MGSVSNQQFAGAKPGEEPSGDSPKAENESQP. Residues 33–106 enclose the CSD domain; that stretch reads HGSGICKWFN…GLESIRVTGP (74 aa). Residues 107 to 130 form a flexible linker region; the sequence is GGVFCIGSERRPKSKSLQKRRSKG. 2 consecutive CCHC-type zinc fingers follow at residues 131–148 and 153–170; these read DRCYNCGGLDHHAKECKL and KKCHFCQSISHMVANCPA. Zn(2+) contacts are provided by cysteine 133, cysteine 136, histidine 141, cysteine 146, cysteine 155, cysteine 158, histidine 163, and cysteine 168. The disordered stretch occupies residues 169 to 202; it reads PAKAQQSPSSQGKPAYFREKEDMHSSALLPETRE.

It belongs to the lin-28 family. In terms of assembly, monomer.

Its subcellular location is the cytoplasm. The protein resides in the rough endoplasmic reticulum. The protein localises to the P-body. It is found in the stress granule. It localises to the nucleus. Its subcellular location is the nucleolus. RNA-binding protein that inhibits processing of pre-let-7 miRNAs and regulates translation of mRNAs that control developmental timing, pluripotency and metabolism. Seems to recognize a common structural G-quartet (G4) feature in its miRNA and mRNA targets. 'Translational enhancer' that drives specific mRNAs to polysomes and increases the efficiency of protein synthesis. Its association with the translational machinery and target mRNAs results in an increased number of initiation events per molecule of mRNA and, indirectly, in mRNA stabilization. Suppressor of microRNA (miRNA) biogenesis, including that of let-7. Binds specific target miRNA precursors (pre-miRNAs), recognizing an 5'-GGAG-3' motif found in their terminal loop, and recruits uridylyltransferase. This results in the terminal uridylation of target pre-miRNAs. Uridylated pre-miRNAs fail to be processed by Dicer and undergo degradation. Localized to the periendoplasmic reticulum area, binds to a large number of spliced mRNAs and inhibits the translation of mRNAs destined for the ER, reducing the synthesis of transmembrane proteins, ER or Golgi lumen proteins, and secretory proteins. Binds to and enhances the translation of mRNAs for several metabolic enzymes, increasing glycolysis and oxidative phosphorylation. Which, with the let-7 repression may enhance tissue repair in adult tissue. The chain is Protein lin-28 homolog A (LIN28A) from Gallus gallus (Chicken).